A 202-amino-acid polypeptide reads, in one-letter code: Orotate phosphoribosyltransferase (202 aa).

Residues lysine 93 and 113 to 121 each bind 5-phospho-alpha-D-ribose 1-diphosphate; that span reads EDIITTGGS. Orotate-binding residues include threonine 117 and arginine 145.

The protein belongs to the purine/pyrimidine phosphoribosyltransferase family. PyrE subfamily. Homodimer. It depends on Mg(2+) as a cofactor.

The enzyme catalyses orotidine 5'-phosphate + diphosphate = orotate + 5-phospho-alpha-D-ribose 1-diphosphate. Its pathway is pyrimidine metabolism; UMP biosynthesis via de novo pathway; UMP from orotate: step 1/2. Catalyzes the transfer of a ribosyl phosphate group from 5-phosphoribose 1-diphosphate to orotate, leading to the formation of orotidine monophosphate (OMP). The chain is Orotate phosphoribosyltransferase from Campylobacter jejuni subsp. jejuni serotype O:23/36 (strain 81-176).